Consider the following 445-residue polypeptide: RCC1 domain-containing protein RUG3, mitochondrial (445 aa).

A mitochondrion-targeting transit peptide spans 1 to 22; sequence MAALSHRLRSFTRRFSSTRTTQ. 7 RCC1 repeats span residues 47–101, 118–169, 171–221, 222–279, 280–331, 333–383, and 385–442; these read TLQL…DSSS, DGDL…ALTH, GDVF…AITE, SGEL…ALTK, EGQL…ALTE, GKVL…AITD, and GELW…CLVS.

Interacts with ATM. In terms of tissue distribution, mostly expressed in roots and rosette leaves of young seedlings, and, to a lower extent, in the flowers and siliques of mature plants. Preferentially expressed in the vascular tissues.

It is found in the mitochondrion. In terms of biological role, regulates DNA damage response (DDR) synergistically with ATM. Together with ATM, involved in the splicing of the ND2/NAD2 mRNA. Required for the accumulation of mitochondrial respiratory chain complex I. Negative regulator of plant responses to abscisic acid (ABA). May have a pivotal role in vegetative growth and the phase transition from vegetative to reproductive growth. This chain is RCC1 domain-containing protein RUG3, mitochondrial, found in Arabidopsis thaliana (Mouse-ear cress).